A 449-amino-acid chain; its full sequence is Glutamyl-tRNA reductase (449 aa).

Substrate contacts are provided by residues T58–R61, S121, E126–Q128, and Q132. The active-site Nucleophile is the C59. G203–A208 contacts NADP(+).

It belongs to the glutamyl-tRNA reductase family. As to quaternary structure, homodimer.

It carries out the reaction (S)-4-amino-5-oxopentanoate + tRNA(Glu) + NADP(+) = L-glutamyl-tRNA(Glu) + NADPH + H(+). The protein operates within porphyrin-containing compound metabolism; protoporphyrin-IX biosynthesis; 5-aminolevulinate from L-glutamyl-tRNA(Glu): step 1/2. Catalyzes the NADPH-dependent reduction of glutamyl-tRNA(Glu) to glutamate 1-semialdehyde (GSA). The chain is Glutamyl-tRNA reductase from Helicobacter pylori (strain G27).